Here is a 171-residue protein sequence, read N- to C-terminus: Crossover junction endodeoxyribonuclease RuvC (171 aa).

Residues Asp-11, Glu-71, and Asp-143 contribute to the active site. Positions 11, 71, and 143 each coordinate Mg(2+).

It belongs to the RuvC family. As to quaternary structure, homodimer which binds Holliday junction (HJ) DNA. The HJ becomes 2-fold symmetrical on binding to RuvC with unstacked arms; it has a different conformation from HJ DNA in complex with RuvA. In the full resolvosome a probable DNA-RuvA(4)-RuvB(12)-RuvC(2) complex forms which resolves the HJ. Mg(2+) serves as cofactor.

The protein resides in the cytoplasm. It catalyses the reaction Endonucleolytic cleavage at a junction such as a reciprocal single-stranded crossover between two homologous DNA duplexes (Holliday junction).. Functionally, the RuvA-RuvB-RuvC complex processes Holliday junction (HJ) DNA during genetic recombination and DNA repair. Endonuclease that resolves HJ intermediates. Cleaves cruciform DNA by making single-stranded nicks across the HJ at symmetrical positions within the homologous arms, yielding a 5'-phosphate and a 3'-hydroxyl group; requires a central core of homology in the junction. The consensus cleavage sequence is 5'-(A/T)TT(C/G)-3'. Cleavage occurs on the 3'-side of the TT dinucleotide at the point of strand exchange. HJ branch migration catalyzed by RuvA-RuvB allows RuvC to scan DNA until it finds its consensus sequence, where it cleaves and resolves the cruciform DNA. This is Crossover junction endodeoxyribonuclease RuvC from Chelativorans sp. (strain BNC1).